The sequence spans 489 residues: MTSSSVRVRFCPSPTGIPHVGMVRTALFNWAYARHTGGTFVFRIEDTDAARDSEESYLALLDALRWLGLDWDEGPEVDGPYGPYRQSQRTEIYHDVVAKLLTAGEAYYAFSTPEEVEARHIAAGRNPKLGYDNFDRQLTDSQRAAYLAEGRKPVVRLRMPDTDLAWHDLVRGPTTFAAGSVPDFALTRATGDPLYTLVNPCDDALMKITHVLRGEDLLPSTPRQIALYQALMRIGIAERVPEFAHLPTVLGEGTKKLSKRDPQSNLFAHRDRGFIPEGLLNYLALLGWAIADDHDLFSLDEMVAAFDVADVNSNPARFDQKKADAINAEHIRMLDVADFTARLRAYLDTHGHQLALDDAAFAVAAELVQTRIVVLEDAWALLKFLNDDRYAIDPKAAAKELGPDAGPVLDAAIAALDGAADWTTADIEAALKTALIEGMALKPRKAFGPIRVAATGTTVSPPLFESLELLGRERSLGRLRSARDQVGSP.

Positions 12–22 match the 'HIGH' region motif; the sequence is PSPTGIPHVGM. Residues 256–260 carry the 'KMSKS' region motif; that stretch reads KLSKR. Lys259 provides a ligand contact to ATP.

This sequence belongs to the class-I aminoacyl-tRNA synthetase family. Glutamate--tRNA ligase type 1 subfamily. In terms of assembly, monomer.

The protein resides in the cytoplasm. It catalyses the reaction tRNA(Glu) + L-glutamate + ATP = L-glutamyl-tRNA(Glu) + AMP + diphosphate. Functionally, catalyzes the attachment of glutamate to tRNA(Glu) in a two-step reaction: glutamate is first activated by ATP to form Glu-AMP and then transferred to the acceptor end of tRNA(Glu). The sequence is that of Glutamate--tRNA ligase from Mycobacterium marinum (strain ATCC BAA-535 / M).